A 95-amino-acid chain; its full sequence is Large ribosomal subunit protein uL23 (95 aa).

This sequence belongs to the universal ribosomal protein uL23 family. Part of the 50S ribosomal subunit. Contacts protein L29, and trigger factor when it is bound to the ribosome.

One of the early assembly proteins it binds 23S rRNA. One of the proteins that surrounds the polypeptide exit tunnel on the outside of the ribosome. Forms the main docking site for trigger factor binding to the ribosome. The protein is Large ribosomal subunit protein uL23 of Anoxybacillus flavithermus (strain DSM 21510 / WK1).